The primary structure comprises 404 residues: Adenylosuccinate synthetase (404 aa).

GTP-binding positions include 12-18 (GDEGKGK) and 40-42 (GHT). Asp13 acts as the Proton acceptor in catalysis. Residues Asp13 and Gly40 each contribute to the Mg(2+) site. Residues 13-16 (DEGK), 38-41 (NAGH), Thr121, Arg135, Gln213, Thr228, and Arg296 contribute to the IMP site. His41 acts as the Proton donor in catalysis. 292-298 (TTTGRAR) lines the substrate pocket. Residues Arg298, 324–326 (KMD), and 389–391 (SCG) contribute to the GTP site.

Belongs to the adenylosuccinate synthetase family. As to quaternary structure, homodimer. Mg(2+) is required as a cofactor.

It is found in the cytoplasm. The catalysed reaction is IMP + L-aspartate + GTP = N(6)-(1,2-dicarboxyethyl)-AMP + GDP + phosphate + 2 H(+). Its pathway is purine metabolism; AMP biosynthesis via de novo pathway; AMP from IMP: step 1/2. In terms of biological role, plays an important role in the de novo pathway of purine nucleotide biosynthesis. Catalyzes the first committed step in the biosynthesis of AMP from IMP. This is Adenylosuccinate synthetase from Deinococcus geothermalis (strain DSM 11300 / CIP 105573 / AG-3a).